Reading from the N-terminus, the 447-residue chain is Probable glycine dehydrogenase (decarboxylating) subunit 1 (447 aa).

This sequence belongs to the GcvP family. N-terminal subunit subfamily. The glycine cleavage system is composed of four proteins: P, T, L and H. In this organism, the P 'protein' is a heterodimer of two subunits.

The catalysed reaction is N(6)-[(R)-lipoyl]-L-lysyl-[glycine-cleavage complex H protein] + glycine + H(+) = N(6)-[(R)-S(8)-aminomethyldihydrolipoyl]-L-lysyl-[glycine-cleavage complex H protein] + CO2. In terms of biological role, the glycine cleavage system catalyzes the degradation of glycine. The P protein binds the alpha-amino group of glycine through its pyridoxal phosphate cofactor; CO(2) is released and the remaining methylamine moiety is then transferred to the lipoamide cofactor of the H protein. The polypeptide is Probable glycine dehydrogenase (decarboxylating) subunit 1 (Macrococcus caseolyticus (strain JCSC5402) (Macrococcoides caseolyticum)).